We begin with the raw amino-acid sequence, 440 residues long: C4-dicarboxylate transport protein (440 aa).

9 helical membrane-spanning segments follow: residues 15 to 35, 46 to 66, 78 to 98, 146 to 166, 190 to 210, 224 to 244, 291 to 311, 332 to 352, and 354 to 374; these read VLVAITIGILLGHYYPETGVA, LIKMVIAPIIFCTVVSGIAGM, YALLYFEIVSTIALIIGLVVV, AFANGDILQVLMFSVLFGFAL, IINMIMKLAPIGAFGAMAFTI, LMACFYITCLLFVLVVLGGIC, VVGLVIPTGYSFNLDGTSIYL, ITLLLVLLVASKGAAGVTGSG, and IVLAATLSAVGHLPVAGLALI. The segment at 420–440 is disordered; that stretch reads GAPLVDTRPTDDLGVAEGPAR.

It belongs to the dicarboxylate/amino acid:cation symporter (DAACS) (TC 2.A.23) family.

The protein resides in the cell inner membrane. Its function is as follows. Responsible for the transport of dicarboxylates such as succinate, fumarate, and malate from the periplasm across the membrane. The sequence is that of C4-dicarboxylate transport protein from Pseudomonas putida (strain ATCC 700007 / DSM 6899 / JCM 31910 / BCRC 17059 / LMG 24140 / F1).